A 213-amino-acid polypeptide reads, in one-letter code: MSLFDKKQLVSQADALPGRNTPMPVATLHAVNNHSMTNVPDGMEIALFAMGCFWGVERLFWQLPGVYSTAAGYTGGYTPNPTYREVCSGETGHAEAVRIVYDPSVTRYEQLLQVFWENHDPAQGMQQGNDHGTQYRSAIYPLTPEQDAAARASLARFQDAMQAAGDHRTVTTEIANATPFYYAEDDHQQYLHKNPYGYCGIGGIGICLPPQLA.

The active site involves Cys52.

Belongs to the MsrA Met sulfoxide reductase family.

The enzyme catalyses L-methionyl-[protein] + [thioredoxin]-disulfide + H2O = L-methionyl-(S)-S-oxide-[protein] + [thioredoxin]-dithiol. It carries out the reaction [thioredoxin]-disulfide + L-methionine + H2O = L-methionine (S)-S-oxide + [thioredoxin]-dithiol. Functionally, has an important function as a repair enzyme for proteins that have been inactivated by oxidation. Catalyzes the reversible oxidation-reduction of methionine sulfoxide in proteins to methionine. The protein is Peptide methionine sulfoxide reductase MsrA of Enterobacter sp. (strain 638).